We begin with the raw amino-acid sequence, 599 residues long: Translation initiation factor IF-2 (599 aa).

The 168-residue stretch at 111–278 (PRPPIITVMG…SILLLAEILE (168 aa)) folds into the tr-type G domain. The G1 stretch occupies residues 120-127 (GHVDHGKT). 120 to 127 (GHVDHGKT) provides a ligand contact to GTP. Residues 145-149 (GITQH) form a G2 region. Positions 166 to 169 (DTPG) are G3. Residues 166-170 (DTPGH) and 220-223 (NKMD) contribute to the GTP site. The interval 220–223 (NKMD) is G4. The segment at 256–258 (SAL) is G5.

Belongs to the TRAFAC class translation factor GTPase superfamily. Classic translation factor GTPase family. IF-2 subfamily.

The protein localises to the cytoplasm. Its function is as follows. One of the essential components for the initiation of protein synthesis. Protects formylmethionyl-tRNA from spontaneous hydrolysis and promotes its binding to the 30S ribosomal subunits. Also involved in the hydrolysis of GTP during the formation of the 70S ribosomal complex. In Mesomycoplasma hyopneumoniae (strain 232) (Mycoplasma hyopneumoniae), this protein is Translation initiation factor IF-2.